Here is a 428-residue protein sequence, read N- to C-terminus: Dihydroorotase (428 aa).

2 residues coordinate Zn(2+): histidine 59 and histidine 61. Residues 61 to 63 and asparagine 93 each bind substrate; that span reads HLR. The Zn(2+) site is built by aspartate 151, histidine 178, and histidine 231. A substrate-binding site is contributed by asparagine 277. Aspartate 304 lines the Zn(2+) pocket. Residue aspartate 304 is part of the active site. Substrate is bound by residues histidine 308 and 322–323; that span reads FG.

This sequence belongs to the metallo-dependent hydrolases superfamily. DHOase family. Class I DHOase subfamily. Requires Zn(2+) as cofactor.

It catalyses the reaction (S)-dihydroorotate + H2O = N-carbamoyl-L-aspartate + H(+). Its pathway is pyrimidine metabolism; UMP biosynthesis via de novo pathway; (S)-dihydroorotate from bicarbonate: step 3/3. Catalyzes the reversible cyclization of carbamoyl aspartate to dihydroorotate. The protein is Dihydroorotase of Bacillus cereus (strain AH187).